We begin with the raw amino-acid sequence, 250 residues long: 3-deoxy-manno-octulosonate cytidylyltransferase (250 aa).

This sequence belongs to the KdsB family.

Its subcellular location is the cytoplasm. It carries out the reaction 3-deoxy-alpha-D-manno-oct-2-ulosonate + CTP = CMP-3-deoxy-beta-D-manno-octulosonate + diphosphate. Its pathway is nucleotide-sugar biosynthesis; CMP-3-deoxy-D-manno-octulosonate biosynthesis; CMP-3-deoxy-D-manno-octulosonate from 3-deoxy-D-manno-octulosonate and CTP: step 1/1. The protein operates within bacterial outer membrane biogenesis; lipopolysaccharide biosynthesis. In terms of biological role, activates KDO (a required 8-carbon sugar) for incorporation into bacterial lipopolysaccharide in Gram-negative bacteria. The chain is 3-deoxy-manno-octulosonate cytidylyltransferase from Yersinia pseudotuberculosis serotype O:1b (strain IP 31758).